We begin with the raw amino-acid sequence, 328 residues long: DNA-directed RNA polymerase subunit alpha (328 aa).

The alpha N-terminal domain (alpha-NTD) stretch occupies residues 1–235 (MQGSVTEFLK…EQLDAFVDLR (235 aa)). The tract at residues 249-328 (FDPILLRPVD…ENWPPASLAE (80 aa)) is alpha C-terminal domain (alpha-CTD).

This sequence belongs to the RNA polymerase alpha chain family. As to quaternary structure, homodimer. The RNAP catalytic core consists of 2 alpha, 1 beta, 1 beta' and 1 omega subunit. When a sigma factor is associated with the core the holoenzyme is formed, which can initiate transcription.

It carries out the reaction RNA(n) + a ribonucleoside 5'-triphosphate = RNA(n+1) + diphosphate. Its function is as follows. DNA-dependent RNA polymerase catalyzes the transcription of DNA into RNA using the four ribonucleoside triphosphates as substrates. The sequence is that of DNA-directed RNA polymerase subunit alpha from Pseudoalteromonas translucida (strain TAC 125).